The following is a 232-amino-acid chain: 2,3,4,5-tetrahydropyridine-2,6-dicarboxylate N-acetyltransferase (232 aa).

Belongs to the transferase hexapeptide repeat family. DapH subfamily.

It catalyses the reaction (S)-2,3,4,5-tetrahydrodipicolinate + acetyl-CoA + H2O = L-2-acetamido-6-oxoheptanedioate + CoA. The protein operates within amino-acid biosynthesis; L-lysine biosynthesis via DAP pathway; LL-2,6-diaminopimelate from (S)-tetrahydrodipicolinate (acetylase route): step 1/3. Functionally, catalyzes the transfer of an acetyl group from acetyl-CoA to tetrahydrodipicolinate. The protein is 2,3,4,5-tetrahydropyridine-2,6-dicarboxylate N-acetyltransferase of Streptococcus mutans serotype c (strain ATCC 700610 / UA159).